A 400-amino-acid polypeptide reads, in one-letter code: Exodeoxyribonuclease 7 large subunit (400 aa).

Belongs to the XseA family. Heterooligomer composed of large and small subunits.

It localises to the cytoplasm. It carries out the reaction Exonucleolytic cleavage in either 5'- to 3'- or 3'- to 5'-direction to yield nucleoside 5'-phosphates.. Its function is as follows. Bidirectionally degrades single-stranded DNA into large acid-insoluble oligonucleotides, which are then degraded further into small acid-soluble oligonucleotides. The protein is Exodeoxyribonuclease 7 large subunit of Clostridium perfringens (strain SM101 / Type A).